The primary structure comprises 772 residues: Transcription factor sdnS (772 aa).

A DNA-binding region (zn(2)-C6 fungal-type) is located at residues 23-53 (CWECRRRKIRCQFGAGNDTVCLPCQARGSTC). 2 disordered regions span residues 94-121 (EAGG…SAQN) and 156-180 (ASML…NSKT). Positions 100 to 121 (ANRSTTQSNRGSRSPSPDSAQN) are enriched in polar residues.

Its subcellular location is the nucleus. Its pathway is antibiotic biosynthesis. Transcription factor; part of the gene cluster that mediates the biosynthesis of sordarin and hypoxysordarin, glycoside antibiotics with a unique tetracyclic diterpene aglycone structure. First, the geranylgeranyl diphosphate synthase sdnC constructs GGDP from farnesyl diphosphate and isopentenyl diphosphate. The diterpene cyclase sdnA then catalyzes the cyclization of GGDP to afford cycloaraneosene. Cycloaraneosene is then hydroxylated four times by the putative cytochrome P450 monooxygenases sdnB, sdnE, sdnF and sdnH to give a hydroxylated cycloaraneosene derivative such as cycloaraneosene-8,9,13,19-tetraol. Although the order of the hydroxylations is unclear, at least C8, C9 and C13 of the cycloaraneosene skeleton are hydroxylated before the sordaricin formation. Dehydration of the 13-hydroxy group of the hydroxylated cycloaraneosene derivative might be catalyzed by an unassigned hypothetical protein such as sdnG and sdnP to construct the cyclopentadiene moiety. The FAD-dependent oxidoreductase sdnN is proposed to catalyze the oxidation at C9 of the hydroxylated cycloaraneosene derivative and also catalyze the Baeyer-Villiger oxidation to give the lactone intermediate. The presumed lactone intermediate would be hydrolyzed to give an acrolein moiety and a carboxylate moiety. Then, [4+2]cycloaddition would occur between the acrolein moiety and the cyclopentadiene moiety to give sordaricin. SdnN might also be involved in the [4+2]cycloaddition after the hypothesized oxidation to accommodate the oxidized product and prompt the [4+2]cycloaddition. GDP-6-deoxy-D-altrose may be biosynthesized from GDP-D-mannose by the putative GDP-mannose-4,6-dehydratase sdnI and the short-chain dehydrogenase sdnK. The glycosyltransferase sdnJ catalyzes the attachment of 6-deoxy-D-altrose onto the 19-hydroxy group of sordaricin to give 4'-O-demethylsordarin. The methyltransferase sdnD would complete the biosynthesis of sordarin. Sordarin can be further modified into hypoxysordarin. The unique acyl chain at the 3'-hydroxy group of hypoxysordarin would be constructed by an iterative type I PKS sdnO and the trans-acting polyketide methyltransferase sdnL. SdnL would be responsible for the introduction of an alpha-methyl group of the polyketide chain. Alternatively, the beta-lactamase-like protein sdnR might be responsible for the cleavage and transfer of the polyketide chain from the PKS sdnO to sordarin. Two putative cytochrome P450 monooxygenases, sdnQ and sdnT, might catalyze the epoxidations of the polyketide chain to complete the biosynthesis of hypoxysordarin. Transcriptional regulators sdnM and sdnS are presumably encoded for the transcriptional regulation of the expression of the sdn gene cluster. This is Transcription factor sdnS from Sordaria araneosa (Pleurage araneosa).